A 407-amino-acid polypeptide reads, in one-letter code: Peptidase T (407 aa).

A Zn(2+)-binding site is contributed by H82. Residue D84 is part of the active site. D143 contacts Zn(2+). The Proton acceptor role is filled by E177. Positions 178, 200, and 382 each coordinate Zn(2+).

It belongs to the peptidase M20B family. The cofactor is Zn(2+).

It localises to the cytoplasm. It carries out the reaction Release of the N-terminal residue from a tripeptide.. Its function is as follows. Cleaves the N-terminal amino acid of tripeptides. The polypeptide is Peptidase T (Streptococcus thermophilus (strain CNRZ 1066)).